We begin with the raw amino-acid sequence, 153 residues long: SsrA-binding protein (153 aa).

It belongs to the SmpB family.

Its subcellular location is the cytoplasm. Required for rescue of stalled ribosomes mediated by trans-translation. Binds to transfer-messenger RNA (tmRNA), required for stable association of tmRNA with ribosomes. tmRNA and SmpB together mimic tRNA shape, replacing the anticodon stem-loop with SmpB. tmRNA is encoded by the ssrA gene; the 2 termini fold to resemble tRNA(Ala) and it encodes a 'tag peptide', a short internal open reading frame. During trans-translation Ala-aminoacylated tmRNA acts like a tRNA, entering the A-site of stalled ribosomes, displacing the stalled mRNA. The ribosome then switches to translate the ORF on the tmRNA; the nascent peptide is terminated with the 'tag peptide' encoded by the tmRNA and targeted for degradation. The ribosome is freed to recommence translation, which seems to be the essential function of trans-translation. The chain is SsrA-binding protein from Lactobacillus delbrueckii subsp. bulgaricus (strain ATCC 11842 / DSM 20081 / BCRC 10696 / JCM 1002 / NBRC 13953 / NCIMB 11778 / NCTC 12712 / WDCM 00102 / Lb 14).